The primary structure comprises 182 residues: Lipoprotein signal peptidase (182 aa).

Helical transmembrane passes span 12–32 (FLWISALAFILDQWSKYTVID), 40–60 (IQVLPFFNFTYVHNYGAAFSF), 70–90 (WFFTAIAVVVSVVILWWLKQS), and 97–117 (LPVAFAFILGGALGNVYDRLV). Active-site residues include D123 and D141. Residues 136-156 (AFNIADSAIFIGAALLIIDMF) traverse the membrane as a helical segment. Residues 161–182 (KKSEENGAESKAGSANSSETIK) are disordered. Over residues 173–182 (GSANSSETIK) the composition is skewed to polar residues.

Belongs to the peptidase A8 family.

It is found in the cell inner membrane. The catalysed reaction is Release of signal peptides from bacterial membrane prolipoproteins. Hydrolyzes -Xaa-Yaa-Zaa-|-(S,diacylglyceryl)Cys-, in which Xaa is hydrophobic (preferably Leu), and Yaa (Ala or Ser) and Zaa (Gly or Ala) have small, neutral side chains.. The protein operates within protein modification; lipoprotein biosynthesis (signal peptide cleavage). Functionally, this protein specifically catalyzes the removal of signal peptides from prolipoproteins. This Alteromonas mediterranea (strain DSM 17117 / CIP 110805 / LMG 28347 / Deep ecotype) protein is Lipoprotein signal peptidase.